We begin with the raw amino-acid sequence, 21 residues long: SALAINQPNYSVLKELGLNED.

The protein belongs to the aldehyde dehydrogenase family. As to quaternary structure, homotetramer.

It catalyses the reaction (S)-2-amino-6-oxohexanoate + NADP(+) + H2O = L-2-aminoadipate + NADPH + 2 H(+). The catalysed reaction is (S)-2-amino-6-oxohexanoate + NAD(+) + H2O = L-2-aminoadipate + NADH + 2 H(+). This chain is Alpha-aminoadipic semialdehyde dehydrogenase (aldh7a1), found in Ctenopharyngodon idella (Grass carp).